The primary structure comprises 72 residues: Translation initiation factor IF-1 (72 aa).

Residues 1 to 72 form the S1-like domain; that stretch reads MAKEDVIEMQ…SKGRIVFRAR (72 aa).

It belongs to the IF-1 family. In terms of assembly, component of the 30S ribosomal translation pre-initiation complex which assembles on the 30S ribosome in the order IF-2 and IF-3, IF-1 and N-formylmethionyl-tRNA(fMet); mRNA recruitment can occur at any time during PIC assembly.

It localises to the cytoplasm. Functionally, one of the essential components for the initiation of protein synthesis. Stabilizes the binding of IF-2 and IF-3 on the 30S subunit to which N-formylmethionyl-tRNA(fMet) subsequently binds. Helps modulate mRNA selection, yielding the 30S pre-initiation complex (PIC). Upon addition of the 50S ribosomal subunit IF-1, IF-2 and IF-3 are released leaving the mature 70S translation initiation complex. This chain is Translation initiation factor IF-1, found in Vibrio cholerae serotype O1 (strain ATCC 39541 / Classical Ogawa 395 / O395).